The following is a 734-amino-acid chain: Photosystem I P700 chlorophyll a apoprotein A2 (734 aa).

A run of 8 helical transmembrane segments spans residues 46-69 (IFASHFGQLAIIFLWTSGNLFHVA), 135-158 (LYTGALFLLFLSAVSLIAGWLHLQ), 175-199 (LNHHLSGLFGVSSLAWTGHLVHVAI), 273-291 (IAHHHLAIALIFLVAGHMY), 330-353 (VHFQLGLALASLGVITSLVAQHMY), 369-395 (AALYTHHQYIAGFIMTGAFAHGAIFFI), 417-439 (AIISHLSWASLFLGFHTLGLYVH), and 517-535 (FLVHHAIALGLHTTTLILV). Cys559 and Cys568 together coordinate [4Fe-4S] cluster. The next 2 helical transmembrane spans lie at 575–596 (AFYLAVFWMLNTIGWVTFYWHW) and 643–665 (LSVWAWMFLFGHLVWATGFMFLI). Chlorophyll a contacts are provided by His654, Met662, and Tyr670. A phylloquinone-binding site is contributed by Trp671. The helical transmembrane segment at 707–727 (LVGLAHFSVGYIFTYAAFLIA) threads the bilayer.

Belongs to the PsaA/PsaB family. As to quaternary structure, the PsaA/B heterodimer binds the P700 chlorophyll special pair and subsequent electron acceptors. PSI consists of a core antenna complex that captures photons, and an electron transfer chain that converts photonic excitation into a charge separation. The eukaryotic PSI reaction center is composed of at least 11 subunits. It depends on P700 is a chlorophyll a/chlorophyll a' dimer, A0 is one or more chlorophyll a, A1 is one or both phylloquinones and FX is a shared 4Fe-4S iron-sulfur center. as a cofactor.

Its subcellular location is the plastid. It localises to the chloroplast thylakoid membrane. It carries out the reaction reduced [plastocyanin] + hnu + oxidized [2Fe-2S]-[ferredoxin] = oxidized [plastocyanin] + reduced [2Fe-2S]-[ferredoxin]. In terms of biological role, psaA and PsaB bind P700, the primary electron donor of photosystem I (PSI), as well as the electron acceptors A0, A1 and FX. PSI is a plastocyanin-ferredoxin oxidoreductase, converting photonic excitation into a charge separation, which transfers an electron from the donor P700 chlorophyll pair to the spectroscopically characterized acceptors A0, A1, FX, FA and FB in turn. Oxidized P700 is reduced on the lumenal side of the thylakoid membrane by plastocyanin. The chain is Photosystem I P700 chlorophyll a apoprotein A2 from Platanus occidentalis (Sycamore).